A 352-amino-acid polypeptide reads, in one-letter code: DNA-directed RNA polymerase subunit alpha (352 aa).

An alpha N-terminal domain (alpha-NTD) region spans residues 1-226 (MLISQRPTLT…ELFGLARELN (226 aa)). The tract at residues 243–352 (HIASFGLPIE…EQDYAETEQL (110 aa)) is alpha C-terminal domain (alpha-CTD). Positions 324–352 (DASTGTWSDSGTFSDNDGGEQDYAETEQL) are disordered. Polar residues predominate over residues 326-338 (STGTWSDSGTFSD). A compositionally biased stretch (acidic residues) spans 340–352 (DGGEQDYAETEQL).

This sequence belongs to the RNA polymerase alpha chain family. Homodimer. The RNAP catalytic core consists of 2 alpha, 1 beta, 1 beta' and 1 omega subunit. When a sigma factor is associated with the core the holoenzyme is formed, which can initiate transcription.

It catalyses the reaction RNA(n) + a ribonucleoside 5'-triphosphate = RNA(n+1) + diphosphate. Functionally, DNA-dependent RNA polymerase catalyzes the transcription of DNA into RNA using the four ribonucleoside triphosphates as substrates. This Nocardia farcinica (strain IFM 10152) protein is DNA-directed RNA polymerase subunit alpha.